The chain runs to 356 residues: uncharacterized protein (356 aa).

Helical transmembrane passes span phenylalanine 2–leucine 22, glutamate 35–phenylalanine 55, asparagine 76–glycine 96, isoleucine 99–leucine 119, isoleucine 124–leucine 144, and valine 151–phenylalanine 171. Residues glutamine 218–isoleucine 353 form the GGDEF domain.

It localises to the cell membrane. This is an uncharacterized protein from Staphylococcus epidermidis (strain ATCC 35984 / DSM 28319 / BCRC 17069 / CCUG 31568 / BM 3577 / RP62A).